A 657-amino-acid polypeptide reads, in one-letter code: Probable cobalt/nickel-exporting P-type ATPase (657 aa).

The next 5 helical transmembrane spans lie at 40–60, 62–82, 101–121, 268–288, and 299–319; these read WATV…NGAP, AMWW…SAWA, AAVG…IVIF, LGMV…GADL, and MIVA…LSAI. Asp-347 serves as the catalytic 4-aspartylphosphate intermediate. 2 residues coordinate Mg(2+): Asp-543 and Asp-547. A helical membrane pass occupies residues 596–618; it reads VVTVNLAIAATFIAVLVLWDLFG.

The protein belongs to the cation transport ATPase (P-type) (TC 3.A.3) family. Type IB subfamily.

The protein localises to the cell membrane. Involved in heavy metal homeostasis. Probably exports nickel and cobalt ions out of the cell. The sequence is that of Probable cobalt/nickel-exporting P-type ATPase (ctpD) from Mycobacterium bovis (strain ATCC BAA-935 / AF2122/97).